The chain runs to 158 residues: MRKAKPKKRQILPDPVYGDVRVTKFVNHLMYDGKKNTAFSIFYGALDIVKTKLSNEEKSALEIWKAALDNITPQVEVKSRRIGGATFQVPTEIRPERKESISMKNLILYARKRGGKTMADKLAAEIVDAFNNQGAAFKRKEDMHRMAEANRAFAHFRF.

Belongs to the universal ribosomal protein uS7 family. Part of the 30S ribosomal subunit. Contacts proteins S9 and S11.

In terms of biological role, one of the primary rRNA binding proteins, it binds directly to 16S rRNA where it nucleates assembly of the head domain of the 30S subunit. Is located at the subunit interface close to the decoding center, probably blocks exit of the E-site tRNA. This chain is Small ribosomal subunit protein uS7, found in Porphyromonas gingivalis (strain ATCC 33277 / DSM 20709 / CIP 103683 / JCM 12257 / NCTC 11834 / 2561).